Consider the following 232-residue polypeptide: Protein fmp52-1, mitochondrial (232 aa).

The transit peptide at 1 to 36 (MASVALIGCTGMVGSHILTSLLAHPSVARVDTISRR) directs the protein to the mitochondrion.

It belongs to the FMP52 family.

The protein localises to the mitochondrion outer membrane. The chain is Protein fmp52-1, mitochondrial (fmp521) from Aspergillus terreus (strain NIH 2624 / FGSC A1156).